Reading from the N-terminus, the 237-residue chain is Proteasome subunit beta 2 (237 aa).

Residues 1-14 are compositionally biased toward polar residues; it reads MNNWSQGSTPQGSD. A propeptide spans 1 to 42 (removed in mature form; by autocatalysis); sequence MNNWSQGSTPQGSDPSPYAPELGSLPDGSQSDDHGDTVNKTG. Residues 1 to 45 form a disordered region; that stretch reads MNNWSQGSTPQGSDPSPYAPELGSLPDGSQSDDHGDTVNKTGTTT. The active-site Nucleophile is T43.

The protein belongs to the peptidase T1B family. The 20S proteasome core is composed of 14 alpha and 14 beta subunits that assemble into four stacked heptameric rings, resulting in a barrel-shaped structure. The two inner rings, each composed of seven catalytic beta subunits, are sandwiched by two outer rings, each composed of seven alpha subunits. The catalytic chamber with the active sites is on the inside of the barrel. Has a gated structure, the ends of the cylinder being occluded by the N-termini of the alpha-subunits. Is capped at one or both ends by the proteasome regulatory ATPase, PAN.

The protein resides in the cytoplasm. The enzyme catalyses Cleavage of peptide bonds with very broad specificity.. Its activity is regulated as follows. The formation of the proteasomal ATPase PAN-20S proteasome complex, via the docking of the C-termini of PAN into the intersubunit pockets in the alpha-rings, triggers opening of the gate for substrate entry. Interconversion between the open-gate and close-gate conformations leads to a dynamic regulation of the 20S proteasome proteolysis activity. Component of the proteasome core, a large protease complex with broad specificity involved in protein degradation. This chain is Proteasome subunit beta 2, found in Haloterrigena turkmenica (strain ATCC 51198 / DSM 5511 / JCM 9101 / NCIMB 13204 / VKM B-1734 / 4k) (Halococcus turkmenicus).